Reading from the N-terminus, the 284-residue chain is UPF0276 protein PA14_21580 (284 aa).

Belongs to the UPF0276 family.

The polypeptide is UPF0276 protein PA14_21580 (Pseudomonas aeruginosa (strain UCBPP-PA14)).